The sequence spans 348 residues: Nicotinate-nucleotide pyrophosphorylase [carboxylating], chloroplastic (348 aa).

Residues 1 to 41 (MISVSRFLSPQFYAIPRSFVKMSASATQTAGEVSMGIKPPS) constitute a chloroplast transit peptide. Substrate contacts are provided by residues Arg-139, 170 to 172 (TRK), Arg-194, Lys-204, Glu-237, Asp-264, 296 to 298 (SGN), and 317 to 319 (SGA).

This sequence belongs to the NadC/ModD family.

It localises to the plastid. The protein resides in the chloroplast. It carries out the reaction nicotinate beta-D-ribonucleotide + CO2 + diphosphate = quinolinate + 5-phospho-alpha-D-ribose 1-diphosphate + 2 H(+). Its pathway is cofactor biosynthesis; NAD(+) biosynthesis; nicotinate D-ribonucleotide from quinolinate: step 1/1. Its function is as follows. Involved in the biosynthesis of NAD(+). Catalyzes the conversion of quinolate to nicotinate to nicotinate beta-D-ribonucleotide. The sequence is that of Nicotinate-nucleotide pyrophosphorylase [carboxylating], chloroplastic from Arabidopsis thaliana (Mouse-ear cress).